Consider the following 56-residue polypeptide: PI-stichotoxin-Hcr2a (56 aa).

Residues 4–54 form the BPTI/Kunitz inhibitor domain; that stretch reads CLEPKVVGPCTAYFPRFYFDSETGKCTPFIYGGCEGNSYVDEKLHACRAIC. 3 cysteine pairs are disulfide-bonded: Cys-4–Cys-54, Cys-13–Cys-37, and Cys-29–Cys-50.

This sequence belongs to the venom Kunitz-type family. Sea anemone type 2 potassium channel toxin subfamily.

The protein resides in the secreted. It localises to the nematocyst. Its function is as follows. Serine protease inhibitor that acts on trypsin. In Radianthus crispa (Leathery sea anemone), this protein is PI-stichotoxin-Hcr2a.